A 495-amino-acid polypeptide reads, in one-letter code: Alpha,alpha-trehalose-phosphate synthase [UDP-forming] 56 kDa subunit (495 aa).

D-glucose 6-phosphate-binding residues include Y102 and D156. Residues R293 and K298 each coordinate UDP. 2 residues coordinate UDP-alpha-D-glucose: R293 and K298. Residue R331 coordinates D-glucose 6-phosphate. UDP is bound by residues I370 and 396 to 400 (LVSYE). UDP-alpha-D-glucose is bound by residues I370 and 392–400 (DGMNLVSYE).

The protein belongs to the glycosyltransferase 20 family. As to quaternary structure, the trehalose synthase complex is composed of the two catalytic subunits TPS1 and TPS2 and at least one of the two regulatory subunits TPS3 or TSL1.

The protein resides in the cytoplasm. The catalysed reaction is D-glucose 6-phosphate + UDP-alpha-D-glucose = alpha,alpha-trehalose 6-phosphate + UDP + H(+). The protein operates within carbohydrate biosynthesis. Activated by fructose 6-phosphate. Inorganic phosphate inhibits the synthase activity in the complex, but activates the synthase activity in the free monomeric form. Its function is as follows. Synthase catalytic subunit of the trehalose synthase complex that catalyzes the production of trehalose from glucose-6-phosphate and UDP-alpha-D-glucose in a two step process. Can function independently of the complex. This is Alpha,alpha-trehalose-phosphate synthase [UDP-forming] 56 kDa subunit from Saccharomyces cerevisiae (strain ATCC 204508 / S288c) (Baker's yeast).